A 412-amino-acid polypeptide reads, in one-letter code: Alanyl-tRNA editing protein Aarsd1-A (412 aa).

4 residues coordinate Zn(2+): H108, H112, C208, and H212.

Belongs to the class-II aminoacyl-tRNA synthetase family. Alax-L subfamily. The cofactor is Zn(2+).

It is found in the cytoplasm. Functionally, functions in trans to edit the amino acid moiety from incorrectly charged tRNA(Ala). The protein is Alanyl-tRNA editing protein Aarsd1-A (aarsd1-a) of Xenopus laevis (African clawed frog).